A 679-amino-acid polypeptide reads, in one-letter code: Methionine--tRNA ligase (679 aa).

The 'HIGH' region motif lies at 14-24; it reads PYANGSIHLGH. Residues Cys-145, Cys-148, Cys-158, and Cys-161 each contribute to the Zn(2+) site. The short motif at 331–335 is the 'KMSKS' region element; that stretch reads KMSKS. ATP is bound at residue Lys-334. The tRNA-binding domain occupies 577 to 679; the sequence is TFAAVDLRIA…NGAKPGQRVM (103 aa).

The protein belongs to the class-I aminoacyl-tRNA synthetase family. MetG type 1 subfamily. Homodimer. The cofactor is Zn(2+).

It is found in the cytoplasm. The enzyme catalyses tRNA(Met) + L-methionine + ATP = L-methionyl-tRNA(Met) + AMP + diphosphate. Is required not only for elongation of protein synthesis but also for the initiation of all mRNA translation through initiator tRNA(fMet) aminoacylation. The polypeptide is Methionine--tRNA ligase (Stutzerimonas stutzeri (strain A1501) (Pseudomonas stutzeri)).